Reading from the N-terminus, the 369-residue chain is 2-aminoethylphosphonate--pyruvate transaminase (369 aa).

At K193 the chain carries N6-(pyridoxal phosphate)lysine.

The protein belongs to the class-V pyridoxal-phosphate-dependent aminotransferase family. PhnW subfamily. Homodimer. It depends on pyridoxal 5'-phosphate as a cofactor.

It carries out the reaction (2-aminoethyl)phosphonate + pyruvate = phosphonoacetaldehyde + L-alanine. Involved in phosphonate degradation. This chain is 2-aminoethylphosphonate--pyruvate transaminase, found in Burkholderia pseudomallei (strain K96243).